Consider the following 488-residue polypeptide: MTVSGTATGVRVRIAPSPTGEPHVGTAYIALFNYLFAKKHGGEFILRIEDTDATRSTPEFETKVLDALKWCGLEWKEGPDIGGPYGPYRQSDRKDMYQPYAQELLEKGHAFRCFCTPARLEQMRETQRAAGKPPKYDGLCLNLAAEEVTSRMAAGETTVIRMKIPTEGSCDFTDGVYGEVSIPWDSVDMQVLVKADGMPTYHMANVIDDHLMKITHVARGEEWLASVPKHILLYRYFGWDQPVFMHLSLMRNADKSKLSKRKNPTSISYYSALGYIPEALMNFLGLFFIQIAEGEELLTMDELSEKFDPENLSKAGAIFDIQKLDWLNGRWIREKLSEEEFQARVLTWAMENDRLKEGLRLSQTRISKLGELPDLAGFLLKSDLGLQPSDFAKIKSPPEEILEILNTVQPDLEKILEWNVETIEAELRAIADRMGKKLKVVVSPLFVAVSGSSRSLPLFDSMAILGRSVVRQRLKLASQAVAALVGSK.

Residues 16-26 carry the 'HIGH' region motif; that stretch reads PSPTGEPHVGT. Positions 257–261 match the 'KMSKS' region motif; sequence KLSKR. Lysine 260 is an ATP binding site.

This sequence belongs to the class-I aminoacyl-tRNA synthetase family. Glutamate--tRNA ligase type 1 subfamily. As to quaternary structure, monomer.

Its subcellular location is the cytoplasm. The enzyme catalyses tRNA(Glu) + L-glutamate + ATP = L-glutamyl-tRNA(Glu) + AMP + diphosphate. Its function is as follows. Catalyzes the attachment of glutamate to tRNA(Glu) in a two-step reaction: glutamate is first activated by ATP to form Glu-AMP and then transferred to the acceptor end of tRNA(Glu). In Rhizobium johnstonii (strain DSM 114642 / LMG 32736 / 3841) (Rhizobium leguminosarum bv. viciae), this protein is Glutamate--tRNA ligase.